Reading from the N-terminus, the 202-residue chain is ATP-dependent Clp protease proteolytic subunit (202 aa).

Catalysis depends on S106, which acts as the Nucleophile. Residue H131 is part of the active site.

It belongs to the peptidase S14 family. In terms of assembly, fourteen ClpP subunits assemble into 2 heptameric rings which stack back to back to give a disk-like structure with a central cavity, resembling the structure of eukaryotic proteasomes.

The protein resides in the cytoplasm. It catalyses the reaction Hydrolysis of proteins to small peptides in the presence of ATP and magnesium. alpha-casein is the usual test substrate. In the absence of ATP, only oligopeptides shorter than five residues are hydrolyzed (such as succinyl-Leu-Tyr-|-NHMec, and Leu-Tyr-Leu-|-Tyr-Trp, in which cleavage of the -Tyr-|-Leu- and -Tyr-|-Trp bonds also occurs).. Functionally, cleaves peptides in various proteins in a process that requires ATP hydrolysis. Has a chymotrypsin-like activity. Plays a major role in the degradation of misfolded proteins. This Variovorax paradoxus (strain S110) protein is ATP-dependent Clp protease proteolytic subunit.